A 733-amino-acid polypeptide reads, in one-letter code: 2'-5'-oligoadenylate synthase 2 (733 aa).

A lipid anchor (N-myristoyl glycine) is attached at Gly2. OAS domain regions lie at residues 47 to 365 (VPSQ…CWDV) and 373 to 713 (TPSH…WKVP). Position 408 is an N6-acetyllysine (Lys408). An ATP-binding site is contributed by Ser427. Mg(2+)-binding residues include Asp439, Asp441, and Asp510. Arg574 and Lys577 together coordinate ATP.

It belongs to the 2-5A synthase family. Homodimer. Mg(2+) serves as cofactor. Myristoylation is not essential for its activity. Post-translationally, glycosylated. Glycosylation is essential for its activity.

It is found in the cytoplasm. The protein localises to the perinuclear region. It carries out the reaction 3 ATP = 5'-triphosphoadenylyl-(2'-&gt;5')-adenylyl-(2'-&gt;5')-adenosine + 2 diphosphate. Its activity is regulated as follows. Produced as a latent enzyme which is activated by double stranded RNA (dsRNA) generated during the course of viral infection. The dsRNA activator must be at least 15 nucleotides long, and no modification of the 2'-hydroxyl group is tolerated. ssRNA or dsDNA do not act as activators. Strongly inhibited by copper, iron and zinc ions. Partially inhibited by cobalt and nickel ions. Interferon-induced, dsRNA-activated antiviral enzyme which plays a critical role in cellular innate antiviral response. Activated by detection of double stranded RNA (dsRNA): polymerizes higher oligomers of 2'-5'-oligoadenylates (2-5A) from ATP which then bind to the inactive monomeric form of ribonuclease L (RNASEL) leading to its dimerization and subsequent activation. Activation of RNASEL leads to degradation of cellular as well as viral RNA, resulting in the inhibition of protein synthesis, thus terminating viral replication. Can mediate the antiviral effect via the classical RNASEL-dependent pathway or an alternative antiviral pathway independent of RNASEL. In addition, it may also play a role in other cellular processes such as apoptosis, cell growth, differentiation and gene regulation. May act as a negative regulator of lactation, stopping lactation in virally infected mammary gland lobules, thereby preventing transmission of viruses to neonates. Non-infected lobules would not be affected, allowing efficient pup feeding during infection. The chain is 2'-5'-oligoadenylate synthase 2 (Oas2) from Rattus norvegicus (Rat).